Consider the following 196-residue polypeptide: Probable GTP-binding protein EngB (196 aa).

The region spanning 22-196 (NLPEIALAGR…GNWIEDKISQ (175 aa)) is the EngB-type G domain. GTP-binding positions include 30-37 (GRSNVGKS), 57-61 (GKTQT), 75-78 (DVPG), 142-145 (TKMD), and 175-177 (FSS). Mg(2+)-binding residues include Ser-37 and Thr-59.

It belongs to the TRAFAC class TrmE-Era-EngA-EngB-Septin-like GTPase superfamily. EngB GTPase family. The cofactor is Mg(2+).

In terms of biological role, necessary for normal cell division and for the maintenance of normal septation. This Lactobacillus acidophilus (strain ATCC 700396 / NCK56 / N2 / NCFM) protein is Probable GTP-binding protein EngB.